The sequence spans 205 residues: Urease accessory protein UreG (205 aa).

14 to 21 (GPVGSGKT) lines the GTP pocket.

It belongs to the SIMIBI class G3E GTPase family. UreG subfamily. In terms of assembly, homodimer. UreD, UreF and UreG form a complex that acts as a GTP-hydrolysis-dependent molecular chaperone, activating the urease apoprotein by helping to assemble the nickel containing metallocenter of UreC. The UreE protein probably delivers the nickel.

It localises to the cytoplasm. In terms of biological role, facilitates the functional incorporation of the urease nickel metallocenter. This process requires GTP hydrolysis, probably effectuated by UreG. This Escherichia coli O157:H7 protein is Urease accessory protein UreG.